Reading from the N-terminus, the 283-residue chain is Protease HtpX (283 aa).

The next 2 helical transmembrane spans lie at 4–24 and 33–53; these read ILLF…ILSV and GGIL…SLFL. His139 serves as a coordination point for Zn(2+). The active site involves Glu140. His143 is a Zn(2+) binding site. 2 consecutive transmembrane segments (helical) span residues 147-167 and 190-210; these read GDMV…IFLS and IYFL…SIIA. Glu218 provides a ligand contact to Zn(2+).

This sequence belongs to the peptidase M48B family. Requires Zn(2+) as cofactor.

The protein resides in the cell inner membrane. The chain is Protease HtpX from Haemophilus influenzae (strain PittEE).